The primary structure comprises 286 residues: 4-diphosphocytidyl-2-C-methyl-D-erythritol kinase (286 aa).

Lys10 is an active-site residue. 94-104 (PVAAGLAGGSS) contributes to the ATP binding site. Asp136 is an active-site residue.

The protein belongs to the GHMP kinase family. IspE subfamily.

It carries out the reaction 4-CDP-2-C-methyl-D-erythritol + ATP = 4-CDP-2-C-methyl-D-erythritol 2-phosphate + ADP + H(+). It participates in isoprenoid biosynthesis; isopentenyl diphosphate biosynthesis via DXP pathway; isopentenyl diphosphate from 1-deoxy-D-xylulose 5-phosphate: step 3/6. In terms of biological role, catalyzes the phosphorylation of the position 2 hydroxy group of 4-diphosphocytidyl-2C-methyl-D-erythritol. This Exiguobacterium sibiricum (strain DSM 17290 / CCUG 55495 / CIP 109462 / JCM 13490 / 255-15) protein is 4-diphosphocytidyl-2-C-methyl-D-erythritol kinase.